Reading from the N-terminus, the 627-residue chain is tRNA uridine 5-carboxymethylaminomethyl modification enzyme MnmG (627 aa).

FAD contacts are provided by residues 13–18, Val-125, and Ser-180; that span reads GGGHAG. 274 to 288 is a binding site for NAD(+); sequence GPRYCPSIEDKVVRF. Residue Gln-371 coordinates FAD.

The protein belongs to the MnmG family. Homodimer. Heterotetramer of two MnmE and two MnmG subunits. FAD is required as a cofactor.

The protein localises to the cytoplasm. NAD-binding protein involved in the addition of a carboxymethylaminomethyl (cmnm) group at the wobble position (U34) of certain tRNAs, forming tRNA-cmnm(5)s(2)U34. The polypeptide is tRNA uridine 5-carboxymethylaminomethyl modification enzyme MnmG (Francisella tularensis subsp. tularensis (strain FSC 198)).